Consider the following 437-residue polypeptide: Transcription factor ets-4 (437 aa).

Residues 1–30 (MNGTGSVGHRWNSLSPEPHSGTESTASTPF) are disordered. Over residues 21–30 (GTESTASTPF) the composition is skewed to polar residues. Residue Lys-32 forms a Glycyl lysine isopeptide (Lys-Gly) (interchain with G-Cter in SUMO) linkage. Ser-73 is modified (phosphoserine). Lys-83 participates in a covalent cross-link: Glycyl lysine isopeptide (Lys-Gly) (interchain with G-Cter in SUMO). Residues 120-202 (HLIQDISTTC…AQLQVWKTGT (83 aa)) form the PNT domain. Residues 275–302 (QGTVLPSPSNSDTSSNGSSQDMNDDDID) are disordered. Low complexity predominate over residues 280 to 293 (PSPSNSDTSSNGSS). Residues 349-432 (VHLWQFIREL…KKQRLVYKFL (84 aa)) constitute a DNA-binding region (ETS).

It belongs to the ETS family. May interact with cebp-1. May interact with tdpt-1 to facilitate its sumoylation. In terms of processing, phosphorylation is required for axon regeneration. Sumoylated; sumoylation inhibits phosphorylation, which is required for probable interaction with cebp-1 and consequently the expression of svh-2. As to expression, expressed in cells of the anterior and posterior bulbs of the pharynx, seam cells, a few unidentified cells of the vulva, the hypodermis, several unidentified neurons, labial socket cells of the head and rectal cells.

Its subcellular location is the nucleus. In terms of biological role, transcription factor which binds to 5'-GGAA/T-3' DNA consensus sequences. Both positively and negatively regulates the expression of target genes. Plays a role in the regulation of adult lifespan, which may in part be through modulation of daf-16 activity. Regulates the expression of genes such as svh-2 in response to axon injury and in addition, may function downstream of the cAMP signaling pathway to promote axon regeneration. Regulates the expression of lipid metabolism genes and may also control the expression of the RNA-binding protein rege-1 which too has been implicated in the control of fat accumulation. In Caenorhabditis elegans, this protein is Transcription factor ets-4.